The sequence spans 369 residues: MATPLPLVFSAPKRGMPPAHFADLSDEQRIEALSELGLPKFRLNQIARHYYGRLEADPMTMTDLPEAARAKVKDALFPTLMEPIRVVEADDENTQKTLWKLHDGTLLESVLMRYPDRATLCISSQAGCGMACPFCATGQGGLDRNLSVGEIVDQVRNAAATMQAEGGRLSNIVFMGMGEPLANYKRVVSAVRQITQPSPEGFGISQRSVTVSTVGLAPAIRKLADEDMSVTLAVSLHTPDDELRDELVPVNNRWSVAEVLDAARYYADKSGRRVSIEYALIRDVNDQGWRADMLGQKLHKALGSRVHVNLIPLNPTPGSKWDASPRERQDEFVRRVIAQGVPCTVRDTKGQEIAAACGQLAAEENSEEK.

Glu-108 serves as the catalytic Proton acceptor. The 239-residue stretch at 114 to 352 (YPDRATLCIS…CTVRDTKGQE (239 aa)) folds into the Radical SAM core domain. Cys-121 and Cys-357 are oxidised to a cystine. [4Fe-4S] cluster is bound by residues Cys-128, Cys-132, and Cys-135. S-adenosyl-L-methionine is bound by residues 178 to 179 (GE), Ser-212, 235 to 237 (SLH), and Asn-314. Cys-357 serves as the catalytic S-methylcysteine intermediate.

Belongs to the radical SAM superfamily. RlmN family. Requires [4Fe-4S] cluster as cofactor.

The protein resides in the cytoplasm. It carries out the reaction adenosine(2503) in 23S rRNA + 2 reduced [2Fe-2S]-[ferredoxin] + 2 S-adenosyl-L-methionine = 2-methyladenosine(2503) in 23S rRNA + 5'-deoxyadenosine + L-methionine + 2 oxidized [2Fe-2S]-[ferredoxin] + S-adenosyl-L-homocysteine. It catalyses the reaction adenosine(37) in tRNA + 2 reduced [2Fe-2S]-[ferredoxin] + 2 S-adenosyl-L-methionine = 2-methyladenosine(37) in tRNA + 5'-deoxyadenosine + L-methionine + 2 oxidized [2Fe-2S]-[ferredoxin] + S-adenosyl-L-homocysteine. Specifically methylates position 2 of adenine 2503 in 23S rRNA and position 2 of adenine 37 in tRNAs. This Corynebacterium efficiens (strain DSM 44549 / YS-314 / AJ 12310 / JCM 11189 / NBRC 100395) protein is Probable dual-specificity RNA methyltransferase RlmN.